The following is a 22-amino-acid chain: Mu-conotoxin KIIIB (22 aa).

The propeptide occupies 1-2 (KR). 7 cysteine pairs are disulfide-bonded: cysteine 5/cysteine 13, cysteine 5/cysteine 19, cysteine 5/cysteine 20, cysteine 6/cysteine 13, cysteine 6/cysteine 19, cysteine 8/cysteine 19, and cysteine 8/cysteine 20. Pharmacophore key residues regions lie at residues 14–16 (RDH) and 18–19 (RC). The residue at position 20 (cysteine 20) is a Cysteine amide.

This sequence belongs to the conotoxin M superfamily. In terms of assembly, monomer. Post-translationally, toxins with three different disulfide connectivities have been synthesized. The conotoxin mu-KIIIA-P1 shows the connectivity C1-C5, C2-C4, and C3-C6, whereas mu-KIIIA-P2 shows the connectivity C1-C6, C2-C4, and C3-C5. The conotoxin mu-KIIIA-N has the 'native' fold of the mu-conotoxin family (C1-C4, C2-C5, and C3-C6). Mu-KIIIA-P1 and mu-KIIIA-P2 are obtained by both thermodynamic oxidative folding and regioselective synthesis. Mu-KIIIA-P1 is the major oxidative folding product. Mu-KIIIA-N is only obtained by regioselective synthesis. In terms of tissue distribution, expressed by the venom duct.

It is found in the secreted. Mu-conotoxin KIIIA-P1: mu-conotoxins block voltage-gated sodium channels (Nav). This toxin potently blocks Nav1.2/SCN2A (IC(50)5-124 nM), Nav1.4/SCN4A (IC(50)=20-90 nM), and Nav1.7/SCN9A (IC(50)=290-413 nM). It moderately blocks Nav1.1/SCN1A, and mNav1.6/SCN8A. It also shows a very low activity on Nav1.3/SCN3A. This toxin binds a microsite within the pore different from the tetrodotoxin binding site 1 (tested on Nav1.2). The block is partial, with a residual current that can be completely blocked by TTX. The toxin probably docks at a more superficial site in the outer vestibule of the channel than does TTX. On rNav1.2/SCN2A, it produces a block that is only partially reversible. The block of Nav1.7 is modified when beta-subunits are coexpressed with the alpha subunit. Hence, blocks of channels containing beta-1 and beta-3 subunits are more potent (compared to channels without beta subunits), whereas blocks of channels containing beta-2 and beta-4 subunits are less potent (compared to channels without beta subunits). In terms of biological role, mu-conotoxin KIIIA-P2: This toxin potently blocks Nav1.2/SCN2A (Kd=230 nM, IC(50)=1.37 uM) and Nav1.4/SCN4A (Kd=830 nM, IC(50)=2 uM). It also moderately blocks Nav1.7/SCN9A (Kd=1.57 uM, IC(50)=5.4 uM). In addition, this toxin may also inhibit other sodium channels, as does Mu-conotoxin KIIIA-P1. Functionally, mu-conotoxin KIIIA-N: This toxin moderately blocks Nav1.2/SCN2A (IC(50)=875 nM), Nav1.4/SCN4A (IC(50)=472 nM), and Nav1.7/SCN9A (IC(50)=887 nM). Its function is as follows. Mu-conotoxin KIIIB-P1: This toxin potently blocks Nav1.2/SCN2A (Kd=470 nM). In addition, this toxin may also inhibit other sodium channels, as does Mu-conotoxin KIIIA-P1. Mu-conotoxin KIIIB-P2: This toxin potently blocks Nav1.2/SCN2A (Kd=26 nM). In addition, this toxin may also inhibit other sodium channels, as does Mu-conotoxin KIIIA-P1. The polypeptide is Mu-conotoxin KIIIB (Conus kinoshitai (Kinoshita's cone)).